Here is a 296-residue protein sequence, read N- to C-terminus: Probable DNA-directed RNA polymerase III subunit RPC6 (296 aa).

This sequence belongs to the eukaryotic RPC34/RPC39 RNA polymerase subunit family.

The protein resides in the nucleus. Functionally, DNA-dependent RNA polymerase catalyzes the transcription of DNA into RNA using the four ribonucleoside triphosphates as substrates. Specific peripheric component of RNA polymerase III which synthesizes small RNAs, such as 5S rRNA and tRNAs. The sequence is that of Probable DNA-directed RNA polymerase III subunit RPC6 from Caenorhabditis elegans.